The following is a 440-amino-acid chain: MKPIIAIVGRPNVGKSTLFNRLVGRRKAMVDDMPGVTRDRNYAEVNRFDVPFILVDTGGFEPETSDRLLQQMREQSRFAMDEADLILFVMDARGGLTPADRDVVDMLRRINKPVFYIINKVDGEKQEAEAGDFYSLGVDHIHTISAEHNRGVGDLMDEVLAAIPYDREKESDEEITRIAVVGRPNVGKSTLVNRLLGYERVVANPTAGTTRDAVDTRFTVNKKPYLLIDTAGIRRKGKTVQKVEKYSVMDALRSIERADVVLIVLNAEEGVTEQDSKIAGYAYEAGRGCIFVVNKWDTLAKDNSSIAKFTEEIRRNFKYLPFAPILFVSAETGQRTGKIIAEVDQVMEQYCKRVTTGELNRVFTQAVDENHAPLSAGRRVKFYFATQVAVKPPSFVVFTNCPEGIHFSYERYIMNRFREAFGFNGTPLKLIFRGRDKKDA.

EngA-type G domains are found at residues 3-167 (PIIA…PYDR) and 176-351 (TRIA…EQYC). GTP-binding positions include 9-16 (GRPNVGKS), 56-60 (DTGGF), 119-122 (NKVD), 182-189 (GRPNVGKS), 229-233 (DTAGI), and 294-297 (NKWD). The KH-like domain occupies 352-436 (KRVTTGELNR…PLKLIFRGRD (85 aa)).

It belongs to the TRAFAC class TrmE-Era-EngA-EngB-Septin-like GTPase superfamily. EngA (Der) GTPase family. Associates with the 50S ribosomal subunit.

In terms of biological role, GTPase that plays an essential role in the late steps of ribosome biogenesis. This is GTPase Der from Geobacter sp. (strain M21).